The sequence spans 70 residues: Large ribosomal subunit protein bL31 (70 aa).

Residues C16, C18, C37, and C40 each coordinate Zn(2+).

This sequence belongs to the bacterial ribosomal protein bL31 family. Type A subfamily. As to quaternary structure, part of the 50S ribosomal subunit. Requires Zn(2+) as cofactor.

Functionally, binds the 23S rRNA. The protein is Large ribosomal subunit protein bL31 of Shewanella oneidensis (strain ATCC 700550 / JCM 31522 / CIP 106686 / LMG 19005 / NCIMB 14063 / MR-1).